The primary structure comprises 515 residues: uncharacterized protein (515 aa).

Disordered stretches follow at residues 117–188 (DNIL…RKSQ), 362–453 (RSTS…AESM), and 496–515 (GNAV…DYFN). Composition is skewed to basic and acidic residues over residues 370 to 380 (KNVESETKQEE), 388 to 402 (PAED…EVIE), and 428 to 438 (PIKEIEDKVEP). Acidic residues predominate over residues 502-515 (ADTESMDDFMDYFN).

This is an uncharacterized protein from Ostreid herpesvirus 1 (isolate France) (OsHV-1).